The sequence spans 179 residues: Peptide deformylase 2 (179 aa).

Fe cation is bound by residues cysteine 101 and histidine 143. Glutamate 144 is an active-site residue. Histidine 147 lines the Fe cation pocket.

Belongs to the polypeptide deformylase family. Fe(2+) serves as cofactor.

The enzyme catalyses N-terminal N-formyl-L-methionyl-[peptide] + H2O = N-terminal L-methionyl-[peptide] + formate. Removes the formyl group from the N-terminal Met of newly synthesized proteins. Requires at least a dipeptide for an efficient rate of reaction. N-terminal L-methionine is a prerequisite for activity but the enzyme has broad specificity at other positions. In Pseudomonas syringae pv. tomato (strain ATCC BAA-871 / DC3000), this protein is Peptide deformylase 2.